The primary structure comprises 492 residues: Sestrin-1 (492 aa).

An N-terminal domain; may mediate the alkylhydroperoxide reductase activity region spans residues 71–252 (FADSFAALGR…ICDITNGNHS (182 aa)). Cys130 serves as the catalytic Cysteine sulfenic acid (-SOH) intermediate. Residues Ser293 and Ser314 each carry the phosphoserine modification. Residues 321–492 (PARDVSRHFE…ALRAITRYMT (172 aa)) form a C-terminal domain; mediates TORC1 regulation region. L-leucine is bound by residues 386-389 (TYNT), Thr398, and Glu463.

It belongs to the sestrin family. As to quaternary structure, interacts with the GATOR2 complex which is composed of MIOS, SEC13, SEH1L, WDR24 and WDR59; the interaction is negatively regulated by leucine. Interacts with RRAGA, RRAGB, RRAGC and RRAGD; may function as a guanine nucleotide dissociation inhibitor for RRAGs and regulate them. Interacts with KEAP1, RBX1 and SQSTM1; in the SQSTM1-dependent autophagic degradation of KEAP1. May interact with PRDX1. As to expression, highly expressed in heart and also detected in liver and skeletal muscles (at protein level).

Its subcellular location is the nucleus. The protein resides in the cytoplasm. It catalyses the reaction a hydroperoxide + L-cysteinyl-[protein] = S-hydroxy-L-cysteinyl-[protein] + an alcohol. In terms of biological role, functions as an intracellular leucine sensor that negatively regulates the TORC1 signaling pathway through the GATOR complex. In absence of leucine, binds the GATOR subcomplex GATOR2 and prevents TORC1 signaling. Binding of leucine to SESN2 disrupts its interaction with GATOR2 thereby activating the TORC1 signaling pathway. This stress-inducible metabolic regulator may also play a role in protection against oxidative and genotoxic stresses. May positively regulate the transcription by NFE2L2 of genes involved in the response to oxidative stress by facilitating the SQSTM1-mediated autophagic degradation of KEAP1. Moreover, may prevent the accumulation of reactive oxygen species (ROS) through the alkylhydroperoxide reductase activity born by the N-terminal domain of the protein. Was originally reported to contribute to oxidative stress resistance by reducing PRDX1. However, this could not be confirmed. The sequence is that of Sestrin-1 from Mus musculus (Mouse).